The sequence spans 89 residues: MSLSTEAKAKILAEFGRGENDTGSTEVQVALLTAQINHLQDHFKEHIHDHHSRRGLLRMVSARRKLTAYLKRTDAERYTALIQKLGLRR.

This sequence belongs to the universal ribosomal protein uS15 family. In terms of assembly, part of the 30S ribosomal subunit. Forms a bridge to the 50S subunit in the 70S ribosome, contacting the 23S rRNA.

In terms of biological role, one of the primary rRNA binding proteins, it binds directly to 16S rRNA where it helps nucleate assembly of the platform of the 30S subunit by binding and bridging several RNA helices of the 16S rRNA. Forms an intersubunit bridge (bridge B4) with the 23S rRNA of the 50S subunit in the ribosome. This chain is Small ribosomal subunit protein uS15, found in Shewanella putrefaciens (strain CN-32 / ATCC BAA-453).